The following is a 193-amino-acid chain: Holliday junction branch migration complex subunit RuvA (193 aa).

The domain I stretch occupies residues 1–64; the sequence is MIGRIAGILL…EDAHLLYGFL (64 aa). Positions 65–139 are domain II; that stretch reads TPQERTTFRE…GKLGADLGAL (75 aa). Residues 139-143 form a flexible linker region; sequence LAGAA. Residues 144–193 form a domain III region; the sequence is SQSDHAADILNALVALGYSEKEGLAAIKNVPAGTGVSEGIKLALKALSKV.

It belongs to the RuvA family. As to quaternary structure, homotetramer. Forms an RuvA(8)-RuvB(12)-Holliday junction (HJ) complex. HJ DNA is sandwiched between 2 RuvA tetramers; dsDNA enters through RuvA and exits via RuvB. An RuvB hexamer assembles on each DNA strand where it exits the tetramer. Each RuvB hexamer is contacted by two RuvA subunits (via domain III) on 2 adjacent RuvB subunits; this complex drives branch migration. In the full resolvosome a probable DNA-RuvA(4)-RuvB(12)-RuvC(2) complex forms which resolves the HJ.

It localises to the cytoplasm. Functionally, the RuvA-RuvB-RuvC complex processes Holliday junction (HJ) DNA during genetic recombination and DNA repair, while the RuvA-RuvB complex plays an important role in the rescue of blocked DNA replication forks via replication fork reversal (RFR). RuvA specifically binds to HJ cruciform DNA, conferring on it an open structure. The RuvB hexamer acts as an ATP-dependent pump, pulling dsDNA into and through the RuvAB complex. HJ branch migration allows RuvC to scan DNA until it finds its consensus sequence, where it cleaves and resolves the cruciform DNA. The chain is Holliday junction branch migration complex subunit RuvA from Burkholderia ambifaria (strain ATCC BAA-244 / DSM 16087 / CCUG 44356 / LMG 19182 / AMMD) (Burkholderia cepacia (strain AMMD)).